A 307-amino-acid chain; its full sequence is Cyclin-dependent kinase 5 activator 1 (307 aa).

S8 bears the Phosphoserine; by CDK5 mark. Positions S96–A136 are disordered. Positions Q100 to P110 are enriched in pro residues. Over residues N112–V125 the composition is skewed to polar residues. Position 138 is a phosphothreonine; by CDK5 (T138).

Belongs to the cyclin-dependent kinase 5 activator family. Heterodimer composed of a catalytic subunit CDK5 and a regulatory subunit CDK5R1 (p25) and macromolecular complex composed of at least CDK5, CDK5R1 (p35) and CDK5RAP1 or CDK5RAP2 or CDK5RAP3. Only the heterodimer shows kinase activity. Interacts with EPHA4 and NGEF; may mediate the activation of NGEF by EPHA4. Interacts with RASGRF2. The complex p35/CDK5 interacts with CLOCK. The p35 form is proteolytically cleaved by calpain, giving rise to the p25 form. P35 has a 5 to 10 fold shorter half-life compared to p25. The conversion results in deregulation of the CDK5 kinase: p25/CDK5 kinase displays an increased and altered tau phosphorylation in comparison to the p35/CDK5 kinase in vivo. Post-translationally, myristoylated. A proper myristoylation signal is essential for the proper distribution of p35. In terms of processing, phosphorylation at Ser-8 and Thr-138 by CDK5 prevents calpain-mediated proteolysis. Ubiquitinated, leading to its degradation: degradation of p35 by proteasome results in down-regulation of CDK5 activity. During this process, CDK5 phosphorylates p35 and induces its ubiquitination and subsequent degradation. Ubiquitinated by the CRL2(FEM1B) complex, which recognizes the -Gly-Leu-Asp-Arg C-degron at the C-terminus, leading to its degradation. Brain and neuron specific.

It localises to the cell membrane. The protein resides in the cell projection. It is found in the neuron projection. Its subcellular location is the nucleus. The protein localises to the cytoplasm. It localises to the perinuclear region. The protein resides in the perikaryon. In terms of biological role, p35 is a neuron specific activator of CDK5. The complex p35/CDK5 is required for neurite outgrowth and cortical lamination. Involved in dendritic spine morphogenesis by mediating the EFNA1-EPHA4 signaling. Activator of TPKII. The complex p35/CDK5 participates in the regulation of the circadian clock by modulating the function of CLOCK protein: phosphorylates CLOCK at 'Thr-451' and 'Thr-461' and regulates the transcriptional activity of the CLOCK-BMAL1 heterodimer in association with altered stability and subcellular distribution. This chain is Cyclin-dependent kinase 5 activator 1 (CDK5R1), found in Spermophilus citellus (European ground squirrel).